A 209-amino-acid polypeptide reads, in one-letter code: Large ribosomal subunit protein uL3 (209 aa).

The tract at residues 133-152 (THGNSLSHRVPGSIGQNQTP) is disordered. Gln150 is modified (N5-methylglutamine).

It belongs to the universal ribosomal protein uL3 family. As to quaternary structure, part of the 50S ribosomal subunit. Forms a cluster with proteins L14 and L19. Post-translationally, methylated by PrmB.

Functionally, one of the primary rRNA binding proteins, it binds directly near the 3'-end of the 23S rRNA, where it nucleates assembly of the 50S subunit. This is Large ribosomal subunit protein uL3 from Yersinia pseudotuberculosis serotype O:1b (strain IP 31758).